A 319-amino-acid polypeptide reads, in one-letter code: Cytochrome f (319 aa).

The first 35 residues, 1-35 (MQNKDACKSLSSWVSLSISLLVLTVPLIWPYNSTA), serve as a signal peptide directing secretion. Positions 36, 56, 59, and 60 each coordinate heme. The chain crosses the membrane as a helical span at residues 285–305 (IQGLLVFFASVILAQIFLVLK).

It belongs to the cytochrome f family. As to quaternary structure, the 4 large subunits of the cytochrome b6-f complex are cytochrome b6, subunit IV (17 kDa polypeptide, petD), cytochrome f and the Rieske protein, while the 4 small subunits are PetG, PetL, PetM and PetN. The complex functions as a dimer. It depends on heme as a cofactor.

It is found in the plastid. Its subcellular location is the chloroplast thylakoid membrane. Functionally, component of the cytochrome b6-f complex, which mediates electron transfer between photosystem II (PSII) and photosystem I (PSI), cyclic electron flow around PSI, and state transitions. The sequence is that of Cytochrome f from Staurastrum punctulatum (Green alga).